Here is a 971-residue protein sequence, read N- to C-terminus: Unconventional myosin-XIX (971 aa).

The interval Met1–Asn25 is disordered. The Myosin motor domain occupies His48–Leu755. Gly145–Thr152 provides a ligand contact to ATP. The actin-binding stretch occupies residues Leu611–Val633. IQ domains lie at Ile758–Ile787 and Gln780–Val809. The interval Ala826–Val971 is myMOMA region.

Belongs to the TRAFAC class myosin-kinesin ATPase superfamily. Myosin family. As to quaternary structure, myosin is a hexamer of 2 heavy chains and 4 light chains.

Its subcellular location is the mitochondrion outer membrane. It is found in the cytoplasm. The protein localises to the cytoskeleton. Its function is as follows. Actin-based motor molecule with ATPase activity that localizes to the mitochondrion outer membrane. Motor protein that moves towards the plus-end of actin filaments. Required for mitochondrial inheritance during mitosis. May be involved in mitochondrial transport or positioning. The polypeptide is Unconventional myosin-XIX (Xenopus laevis (African clawed frog)).